The primary structure comprises 53 residues: Large ribosomal subunit protein bL32 (53 aa).

The disordered stretch occupies residues 1–27; the sequence is MAVQQNKKSRSRRDMRRSHDALTTAAV. A compositionally biased stretch (basic residues) spans 7 to 16; the sequence is KKSRSRRDMR.

Belongs to the bacterial ribosomal protein bL32 family.

This is Large ribosomal subunit protein bL32 from Glaesserella parasuis serovar 5 (strain SH0165) (Haemophilus parasuis).